A 156-amino-acid polypeptide reads, in one-letter code: CKLF-like MARVEL transmembrane domain-containing protein 5 (156 aa).

One can recognise an MARVEL domain in the interval 29–146 (FLSSLKGILL…DAFKIYRTEL (118 aa)). The next 4 helical transmembrane spans lie at 35 to 55 (GILL…FTAS), 56 to 76 (ISAY…FLFL), 93 to 113 (LDFL…FAAV), and 119 to 139 (AAIA…YDAF).

It belongs to the chemokine-like factor family.

The protein resides in the membrane. In Mus musculus (Mouse), this protein is CKLF-like MARVEL transmembrane domain-containing protein 5 (Cmtm5).